A 309-amino-acid polypeptide reads, in one-letter code: HPr kinase/phosphorylase (309 aa).

Residues His138 and Lys159 contribute to the active site. 153-160 contacts ATP; it reads GASGIGKS. Position 160 (Ser160) interacts with Mg(2+). The active-site Proton acceptor; for phosphorylation activity. Proton donor; for dephosphorylation activity is Asp177. Residues 201–210 are important for the catalytic mechanism of both phosphorylation and dephosphorylation; the sequence is IEIRGVGIID. Glu202 serves as a coordination point for Mg(2+). Residue Arg243 is part of the active site. The segment at 264 to 269 is important for the catalytic mechanism of dephosphorylation; sequence PVKTGR.

It belongs to the HPrK/P family. Homohexamer. Requires Mg(2+) as cofactor.

The catalysed reaction is [HPr protein]-L-serine + ATP = [HPr protein]-O-phospho-L-serine + ADP + H(+). It catalyses the reaction [HPr protein]-O-phospho-L-serine + phosphate + H(+) = [HPr protein]-L-serine + diphosphate. Catalyzes the ATP- as well as the pyrophosphate-dependent phosphorylation of a specific serine residue in HPr, a phosphocarrier protein of the phosphoenolpyruvate-dependent sugar phosphotransferase system (PTS). HprK/P also catalyzes the pyrophosphate-producing, inorganic phosphate-dependent dephosphorylation (phosphorolysis) of seryl-phosphorylated HPr (P-Ser-HPr). The two antagonistic activities of HprK/P are regulated by several intracellular metabolites, which change their concentration in response to the absence or presence of rapidly metabolisable carbon sources (glucose, fructose, etc.) in the growth medium. Therefore, by controlling the phosphorylation state of HPr, HPrK/P is a sensor enzyme that plays a major role in the regulation of carbon metabolism and sugar transport: it mediates carbon catabolite repression (CCR), and regulates PTS-catalyzed carbohydrate uptake and inducer exclusion. The protein is HPr kinase/phosphorylase of Lactococcus lactis subsp. lactis (strain IL1403) (Streptococcus lactis).